The sequence spans 138 residues: Centromere protein S (138 aa).

The residue at position 1 (Met1) is an N-acetylmethionine. The interval 110-138 (RKAQKKKKSEDGSKNSRQPAEAGVVESEN) is disordered.

The protein belongs to the TAF9 family. CENP-S/MHF1 subfamily. In terms of assembly, heterodimer with CENPX, sometimes called MHF; this interaction stabilizes both partners. MHF heterodimers can assemble to form tetrameric structures. MHF also coassemble with CENPT-CENPW heterodimers at centromeres to form the tetrameric CENP-T-W-S-X complex. Forms a discrete complex with FANCM and CENPX, called FANCM-MHF; this interaction, probably mediated by direct binding between CENPS and FANCM, leads to synergistic activation of double-stranded DNA binding and strongly stimulates FANCM-mediated DNA remodeling. Recruited by FANCM to the Fanconi anemia (FA) core complex, which consists of CENPS, CENPX, FANCA, FANCB, FANCC, FANCE, FANCF, FANCG, FANCL, FANCM, FAAP24 and FAAP100. The FA core complex associates with Bloom syndrome (BLM) complex, which consists of at least BLM, DNA topoisomerase 3-alpha (TOP3A), RMI1/BLAP75, RPA1/RPA70 and RPA2/RPA32. The super complex between FA and BLM is called BRAFT. Component of the CENPA-CAD complex, composed of CENPI, CENPK, CENPL, CENPO, CENPP, CENPQ, CENPR and CENPS. The CENPA-CAD complex is probably recruited on centromeres by the CENPA-NAC complex, composed of at least CENPA, CENPC, CENPH, CENPM, CENPN, CENPT and CENPU. As to expression, ubiquitously expressed.

Its subcellular location is the nucleus. It localises to the chromosome. The protein resides in the centromere. It is found in the kinetochore. Functionally, DNA-binding component of the Fanconi anemia (FA) core complex. Required for the normal activation of the FA pathway, leading to monoubiquitination of the FANCI-FANCD2 complex in response to DNA damage, cellular resistance to DNA cross-linking drugs, and prevention of chromosomal breakage. In complex with CENPX (MHF heterodimer), crucial cofactor for FANCM in both binding and ATP-dependent remodeling of DNA. Stabilizes FANCM. In complex with CENPX and FANCM (but not other FANC proteins), rapidly recruited to blocked forks and promotes gene conversion at blocked replication forks. In complex with CENPT, CENPW and CENPX (CENP-T-W-S-X heterotetramer), involved in the formation of a functional kinetochore outer plate, which is essential for kinetochore-microtubule attachment and faithful mitotic progression. As a component of MHF and CENP-T-W-S-X complexes, binds DNA and bends it to form a nucleosome-like structure. DNA-binding function is fulfilled in the presence of CENPX, with the following preference for DNA substates: Holliday junction &gt; double-stranded &gt; splay arm &gt; single-stranded. Does not bind DNA on its own. This is Centromere protein S (CENPS) from Homo sapiens (Human).